A 912-amino-acid polypeptide reads, in one-letter code: Intercellular adhesion molecule 5 (912 aa).

Residues 1 to 29 (MPGPSPGLRALLGFWVALGLGILRLSAVA) form the signal peptide. Residues 30–826 (QEPFWADLQP…RITVRVAGPW (797 aa)) lie on the Extracellular side of the membrane. 9 consecutive Ig-like C2-type domains span residues 47–127 (GGSL…PLPP), 132–232 (GENF…RLLA), 239–324 (DSQS…LLTL), 332–395 (GKLV…NGSA), 403–481 (PRLD…VTLT), 486–561 (PALD…VAVT), 566–645 (PSFE…NPLG), 659–734 (PQMD…TVGV), and 738–819 (PVVA…RRIT). The N-linked (GlcNAc...) (high mannose) asparagine glycan is linked to asparagine 53. 2 cysteine pairs are disulfide-bonded: cysteine 54-cysteine 97 and cysteine 58-cysteine 101. Residue asparagine 134 is glycosylated (N-linked (GlcNAc...) asparagine). A disulfide bridge links cysteine 139 with cysteine 195. A phosphothreonine mark is found at threonine 179 and threonine 181. Residues asparagine 192 and asparagine 211 are each glycosylated (N-linked (GlcNAc...) asparagine). A disulfide bridge connects residues cysteine 246 and cysteine 297. 3 N-linked (GlcNAc...) asparagine glycosylation sites follow: asparagine 311, asparagine 366, and asparagine 392. Cysteine 339 and cysteine 378 are oxidised to a cystine. 3 cysteine pairs are disulfide-bonded: cysteine 410/cysteine 465, cysteine 493/cysteine 546, and cysteine 573/cysteine 638. N-linked (GlcNAc...) asparagine glycosylation is found at asparagine 576 and asparagine 639. Cysteine 666 and cysteine 717 are disulfide-bonded. The tract at residues 678–708 (AAGPACARGRPSPRVRCSREGAPRPARPRVS) is disordered. N-linked (GlcNAc...) asparagine glycans are attached at residues asparagine 756, asparagine 787, and asparagine 788. Cysteine 761 and cysteine 806 form a disulfide bridge. Residues 827–847 (LWIAVGGAVGGAVLLAAGAGL) traverse the membrane as a helical segment. Over 848-912 (AFYVQSTACK…EVFAIQLTSA (65 aa)) the chain is Cytoplasmic. Residues 880 to 902 (GGAGSGAEGGPEAEDSAESPAGG) are disordered.

Belongs to the immunoglobulin superfamily. ICAM family. Post-translationally, glycosylation at Asn-53 is critical for functional folding. Expressed on neurons in the most rostral segment of the mammalian brain, the telencephalon.

It localises to the membrane. ICAM proteins are ligands for the leukocyte adhesion protein LFA-1 (integrin alpha-L/beta-2). The polypeptide is Intercellular adhesion molecule 5 (ICAM5) (Oryctolagus cuniculus (Rabbit)).